The primary structure comprises 87 residues: Beta-defensin 109 (87 aa).

Residues 1–22 (MRLHLLLLILLLFSILLSPVRG) form the signal peptide. Intrachain disulfides connect Cys-31–Cys-59, Cys-38–Cys-53, and Cys-43–Cys-60.

Belongs to the beta-defensin family.

The protein resides in the secreted. Its function is as follows. Has antibacterial activity. The chain is Beta-defensin 109 (DEFB109) from Pan troglodytes (Chimpanzee).